The following is a 459-amino-acid chain: Magnesium transporter MRS2-11, chloroplastic (459 aa).

A chloroplast-targeting transit peptide spans 1–62 (MALTPIPSTF…EALKVLSRSK (62 aa)). Residues 76 to 122 (GDYESLNVSDDDDGSDSNSSDGDNGGGRDDSKKIDSSSSSSSSDSTS) are disordered. Positions 101-110 (GGRDDSKKID) are enriched in basic and acidic residues. The segment covering 111-122 (SSSSSSSSDSTS) has biased composition (low complexity). 2 helical membrane-spanning segments follow: residues 397 to 417 (LLLQVGTFCVAVGALIAGIFG) and 430 to 450 (AFWLTTGGIIIGAAVAFFLMY). A Required for magnesium transport activity motif is present at residues 417-419 (GMN).

The protein belongs to the CorA metal ion transporter (MIT) (TC 1.A.35.5) family. In terms of tissue distribution, expressed in the green part of the plant. Preferentially expressed in the spongy mesophyll cells and stomata of young leaves but also detected in cotyledons and at the base of the leaf petioles.

It is found in the plastid. The protein resides in the chloroplast membrane. Its function is as follows. High-affinity magnesium transporter that mediates the influx of magnesium in chloroplast. The chain is Magnesium transporter MRS2-11, chloroplastic (MRS2-11) from Arabidopsis thaliana (Mouse-ear cress).